Consider the following 193-residue polypeptide: dCTP deaminase (193 aa).

DCTP contacts are provided by residues Arg110–Arg115, Asp128, Val136–Glu138, Tyr171, Lys178, and Gln182. The Proton donor/acceptor role is filled by Glu138. Residues Arg169–Asp193 form a disordered region.

The protein belongs to the dCTP deaminase family. As to quaternary structure, homotrimer.

It carries out the reaction dCTP + H2O + H(+) = dUTP + NH4(+). The protein operates within pyrimidine metabolism; dUMP biosynthesis; dUMP from dCTP (dUTP route): step 1/2. In terms of biological role, catalyzes the deamination of dCTP to dUTP. The chain is dCTP deaminase from Serratia proteamaculans (strain 568).